We begin with the raw amino-acid sequence, 875 residues long: Outer membrane usher protein FocD (875 aa).

A signal peptide spans 1–38 (MFFGDGGQLLSDKSLTGSAGGGNNRMKFNILPLAFFIG). Residues C852 and C874 are joined by a disulfide bond.

This sequence belongs to the fimbrial export usher family.

The protein resides in the cell outer membrane. In terms of biological role, involved in the export and assembly of the F1C fimbriae subunits across the outer membrane. This is Outer membrane usher protein FocD (focD) from Escherichia coli.